A 215-amino-acid chain; its full sequence is Large ribosomal subunit protein uL4 (215 aa).

The disordered stretch occupies residues 46-72; the sequence is TAKSKNRAEVSGGGRKPWAQKGGGRAR. The segment covering 56–71 has biased composition (gly residues); it reads SGGGRKPWAQKGGGRA.

Belongs to the universal ribosomal protein uL4 family. As to quaternary structure, part of the 50S ribosomal subunit.

One of the primary rRNA binding proteins, this protein initially binds near the 5'-end of the 23S rRNA. It is important during the early stages of 50S assembly. It makes multiple contacts with different domains of the 23S rRNA in the assembled 50S subunit and ribosome. In terms of biological role, forms part of the polypeptide exit tunnel. In Helicobacter pylori (strain Shi470), this protein is Large ribosomal subunit protein uL4.